We begin with the raw amino-acid sequence, 192 residues long: Signal peptidase complex catalytic subunit sec11 (192 aa).

The Cytoplasmic segment spans residues methionine 1 to glutamine 18. Residues valine 19–phenylalanine 39 traverse the membrane as a helical; Signal-anchor for type II membrane protein segment. The Lumenal segment spans residues threonine 40–glutamine 192. Residues serine 53, histidine 92, and aspartate 133 each act as charge relay system in the active site. Residues valine 177–leucine 188 are C-terminal short (CTS) helix.

The protein belongs to the peptidase S26B family. In terms of assembly, component of the signal peptidase complex (SPC) composed of a catalytic subunit SEC11 and three accessory subunits SPC1, SPC2 and SPC3. The complex induces a local thinning of the ER membrane which is used to measure the length of the signal peptide (SP) h-region of protein substrates. This ensures the selectivity of the complex towards h-regions shorter than 18-20 amino acids. SPC associates with the translocon complex.

The protein resides in the endoplasmic reticulum membrane. The enzyme catalyses Cleavage of hydrophobic, N-terminal signal or leader sequences from secreted and periplasmic proteins.. In terms of biological role, catalytic component of the signal peptidase complex (SPC) which catalyzes the cleavage of N-terminal signal sequences from nascent proteins as they are translocated into the lumen of the endoplasmic reticulum. Specifically cleaves N-terminal signal peptides that contain a hydrophobic alpha-helix (h-region) shorter than 18-20 amino acids. This Aspergillus fumigatus (strain CBS 144.89 / FGSC A1163 / CEA10) (Neosartorya fumigata) protein is Signal peptidase complex catalytic subunit sec11 (sec11).